The following is a 162-amino-acid chain: Transcription elongation factor GreA (162 aa).

Residues 1–28 (MQKEPMLEETYRKLSEELEQLKSVERGV) are a coiled coil.

Belongs to the GreA/GreB family.

Functionally, necessary for efficient RNA polymerase transcription elongation past template-encoded arresting sites. The arresting sites in DNA have the property of trapping a certain fraction of elongating RNA polymerases that pass through, resulting in locked ternary complexes. Cleavage of the nascent transcript by cleavage factors such as GreA or GreB allows the resumption of elongation from the new 3'terminus. GreA releases sequences of 2 to 3 nucleotides. This chain is Transcription elongation factor GreA, found in Sulfurovum sp. (strain NBC37-1).